The chain runs to 434 residues: Protein phosphatase 2C 56 (434 aa).

Residues 128-422 (LYGFTSICGR…DNISVVVVDL (295 aa)) form the PPM-type phosphatase domain. Residues Asp-177, Asp-261, Ser-262, Asp-347, and Asp-413 each coordinate Mg(2+). Residues 423 to 427 (KPRRK) carry the Nuclear localization signal motif.

This sequence belongs to the PP2C family. Interacts with SPK1, ATHB-6, CIPK15/PKS3, GPX3, SRK2E/OST1, SRK2D, SRK2I, SCAR1, SCAR2, SCAR3 and SCARL. Binds to the PA released by the phospholipase D alpha 1 (PLDALPHA1) in response to ABA during the stomatal closure regulation. Interacts with ABA-bounded PYR1, PYL1, PYL2, PYL3, PYL4, PYL5, PYL6, PYL7, PYL8, PYL9, PYL10, and with free PYL2, PYL3, PYL4 and PYL13. Binds to RPL12B, CPK21 and CPK23. Binds to MAPKKK18. Interacts with KIN10. Interacts with phosphorylated PYL8/RCAR3. Mg(2+) serves as cofactor. The cofactor is Mn(2+). In terms of tissue distribution, expressed in seeds and seedlings. In roots, confined to lateral root caps and columella cells.

It localises to the nucleus. Its subcellular location is the cytoplasm. It is found in the cell membrane. It carries out the reaction O-phospho-L-seryl-[protein] + H2O = L-seryl-[protein] + phosphate. The enzyme catalyses O-phospho-L-threonyl-[protein] + H2O = L-threonyl-[protein] + phosphate. With respect to regulation, phosphatase activity repressed by oxidized GPX3 and phosphatidic acid (PA). PA is produced by PLD alpha 1 in response to ABA. Repressed by PYR/PYL/RCAR ABA receptors in an ABA-dependent manner. Its function is as follows. Key component and repressor of the abscisic acid (ABA) signaling pathway that regulates numerous ABA responses, such as stomatal closure, osmotic water permeability of the plasma membrane (Pos), drought-induced resistance and rhizogenesis, response to glucose, high light stress, seed germination and inhibition of vegetative growth. During the stomatal closure regulation, modulates the inward calcium-channel permeability as well as the actin reorganization in guard cells in response to ABA. Involved in the resistance to the bacterial pathogen Pseudomonas syringae pv. tomato. Controls negatively fibrillin expression that is involved in mediating ABA-induced photoprotection. May be involved in ABA content regulation. Plays a role in the Pro accumulation in response to reduced water availability (low water potential). Required for the ABA negative regulation of the ethylene-induced hyponastic growth. Involved in acquired thermotolerance of root growth and seedling survival. Activates/represses SRK2E/OST1 in response to ABA-dependent stimuli, especially in stomata closure regulation involving SLAC1. Represses MAPKKK18 activity and promotes MAPKKK18 degradation by the proteasome pathway upon abscisic acid (ABA) treatment. Represses KIN10 activity by the specific dephosphorylation of its T-loop Thr-198, leading to a poststress inactivation of SnRK1 signaling. Restricts MAPKKK20 activity by dephosphorylation. The chain is Protein phosphatase 2C 56 from Arabidopsis thaliana (Mouse-ear cress).